The following is a 341-amino-acid chain: MIEFRQVSKSFHKKKQTIDALKDVSFTVNRNDIFGVIGYSGAGKSTLVRLVNHLEAASNGQVIVDGHDITNYSEKGMREIKKDIGMIFQHFNLLNSATVFKNVAMPLILSKKSKTEIKQRVTEMLEFVGLSDKKDQFPDELSGGQKQRVAIARALVTNPKILLCDEATSALDPATTASILTLLKNVNQTFGITIMMITHEMRVIKDICNRVAVMEKGQVVETGTVKEVFSHPKTTIAQNFVSTVIQTEPSTSLIRRLNDEQVGGFKDYKIFVEETQVTQPIINDLIQICGREVKILFSSMSEIQGNTVCYMWLRFNIDQQFDDTAINQYFKEKNIQFEEVH.

In terms of domain architecture, ABC transporter spans 2–241; that stretch reads IEFRQVSKSF…PKTTIAQNFV (240 aa). 38 to 45 is a binding site for ATP; sequence GYSGAGKS.

The protein belongs to the ABC transporter superfamily. Methionine importer (TC 3.A.1.24) family. In terms of assembly, the complex is composed of two ATP-binding proteins (MetN), two transmembrane proteins (MetI) and a solute-binding protein (MetQ).

It is found in the cell membrane. It carries out the reaction L-methionine(out) + ATP + H2O = L-methionine(in) + ADP + phosphate + H(+). It catalyses the reaction D-methionine(out) + ATP + H2O = D-methionine(in) + ADP + phosphate + H(+). Part of the ABC transporter complex MetNIQ involved in methionine import. Responsible for energy coupling to the transport system. This chain is Methionine import ATP-binding protein MetN 1, found in Staphylococcus aureus (strain Mu50 / ATCC 700699).